Here is a 171-residue protein sequence, read N- to C-terminus: S-ribosylhomocysteine lyase (171 aa).

His-54, His-58, and Cys-128 together coordinate Fe cation.

Belongs to the LuxS family. As to quaternary structure, homodimer. Fe cation serves as cofactor.

The catalysed reaction is S-(5-deoxy-D-ribos-5-yl)-L-homocysteine = (S)-4,5-dihydroxypentane-2,3-dione + L-homocysteine. Functionally, involved in the synthesis of autoinducer 2 (AI-2) which is secreted by bacteria and is used to communicate both the cell density and the metabolic potential of the environment. The regulation of gene expression in response to changes in cell density is called quorum sensing. Catalyzes the transformation of S-ribosylhomocysteine (RHC) to homocysteine (HC) and 4,5-dihydroxy-2,3-pentadione (DPD). This is S-ribosylhomocysteine lyase from Escherichia fergusonii (strain ATCC 35469 / DSM 13698 / CCUG 18766 / IAM 14443 / JCM 21226 / LMG 7866 / NBRC 102419 / NCTC 12128 / CDC 0568-73).